We begin with the raw amino-acid sequence, 187 residues long: Coiled-coil domain-containing protein 201 (187 aa).

Disordered regions lie at residues 1–79 (MEPG…PPAT) and 92–159 (KESS…RAAA). A coiled-coil region spans residues 111–131 (LTQRQRQRQQQQQQQESLRAK). Residues 147–157 (GRKRRDPKKRA) show a composition bias toward basic residues.

The protein is Coiled-coil domain-containing protein 201 of Homo sapiens (Human).